Consider the following 507-residue polypeptide: Anaerobic nitric oxide reductase transcription regulator NorR (507 aa).

Aspartate 57 is modified (4-aspartylphosphate). The 230-residue stretch at 188–417 (IIGLSSVMQQ…LEHSIYRAAI (230 aa)) folds into the Sigma-54 factor interaction domain. ATP contacts are provided by residues 216-223 (GETGVGKE) and 279-288 (ADNGTLFLDE). Residues 483-502 (WAATARKLELDSGNLHRLAK) constitute a DNA-binding region (H-T-H motif).

It participates in nitrogen metabolism; nitric oxide reduction. In terms of biological role, required for the expression of anaerobic nitric oxide (NO) reductase, acts as a transcriptional activator for at least the norVW operon. Activation also requires sigma-54. The polypeptide is Anaerobic nitric oxide reductase transcription regulator NorR (Serratia proteamaculans (strain 568)).